Here is a 266-residue protein sequence, read N- to C-terminus: Putative carbamate hydrolase RutD (266 aa).

The protein belongs to the AB hydrolase superfamily. Hydrolase RutD family.

The enzyme catalyses carbamate + 2 H(+) = NH4(+) + CO2. Its function is as follows. Involved in pyrimidine catabolism. May facilitate the hydrolysis of carbamate, a reaction that can also occur spontaneously. The sequence is that of Putative carbamate hydrolase RutD from Acinetobacter baylyi (strain ATCC 33305 / BD413 / ADP1).